Here is a 22-residue protein sequence, read N- to C-terminus: Defensin D1 (22 aa).

The protein belongs to the DEFL family. Group II subfamily.

Functionally, antimicrobial peptide. Active against Gram-positive and Gram-negative bacterial pathogens. This chain is Defensin D1, found in Spinacia oleracea (Spinach).